Reading from the N-terminus, the 457-residue chain is ATP synthase subunit beta (457 aa).

147-154 (GGAGVGKT) provides a ligand contact to ATP.

The protein belongs to the ATPase alpha/beta chains family. F-type ATPases have 2 components, CF(1) - the catalytic core - and CF(0) - the membrane proton channel. CF(1) has five subunits: alpha(3), beta(3), gamma(1), delta(1), epsilon(1). CF(0) has three main subunits: a(1), b(2) and c(9-12). The alpha and beta chains form an alternating ring which encloses part of the gamma chain. CF(1) is attached to CF(0) by a central stalk formed by the gamma and epsilon chains, while a peripheral stalk is formed by the delta and b chains.

Its subcellular location is the cell inner membrane. The catalysed reaction is ATP + H2O + 4 H(+)(in) = ADP + phosphate + 5 H(+)(out). Functionally, produces ATP from ADP in the presence of a proton gradient across the membrane. The catalytic sites are hosted primarily by the beta subunits. This Haemophilus influenzae (strain PittEE) protein is ATP synthase subunit beta.